The following is an 86-amino-acid chain: Probable weak neurotoxin NNAM1 (86 aa).

An N-terminal signal peptide occupies residues 1 to 21 (MKTLLLSLVVVTIVCLDLGYT). 5 disulfides stabilise this stretch: C24/C45, C27/C32, C38/C63, C67/C78, and C79/C84.

The protein belongs to the three-finger toxin family. Ancestral subfamily. Orphan group II sub-subfamily. As to expression, expressed by the venom gland.

The protein resides in the secreted. Binds with low affinity to muscular (alpha-1-beta-1-delta-epsilon/CHRNA1-CHRNB1-CHRND-CHRNE) and very low affinity to neuronal (alpha-7/CHRNA7) nicotinic acetylcholine receptor (nAChR). In Naja atra (Chinese cobra), this protein is Probable weak neurotoxin NNAM1.